The sequence spans 475 residues: Ribulose bisphosphate carboxylase large chain (475 aa).

The propeptide occupies 1 to 2 (MS). At P3 the chain carries N-acetylproline. K14 carries the N6,N6,N6-trimethyllysine modification. Substrate-binding residues include N123 and T173. K175 acts as the Proton acceptor in catalysis. Substrate is bound at residue K177. 3 residues coordinate Mg(2+): K201, D203, and E204. K201 bears the N6-carboxylysine mark. H294 (proton acceptor) is an active-site residue. R295, H327, and S379 together coordinate substrate.

This sequence belongs to the RuBisCO large chain family. Type I subfamily. Heterohexadecamer of 8 large chains and 8 small chains; disulfide-linked. The disulfide link is formed within the large subunit homodimers. It depends on Mg(2+) as a cofactor. In terms of processing, the disulfide bond which can form in the large chain dimeric partners within the hexadecamer appears to be associated with oxidative stress and protein turnover.

The protein localises to the plastid. Its subcellular location is the chloroplast. It catalyses the reaction 2 (2R)-3-phosphoglycerate + 2 H(+) = D-ribulose 1,5-bisphosphate + CO2 + H2O. It carries out the reaction D-ribulose 1,5-bisphosphate + O2 = 2-phosphoglycolate + (2R)-3-phosphoglycerate + 2 H(+). Functionally, ruBisCO catalyzes two reactions: the carboxylation of D-ribulose 1,5-bisphosphate, the primary event in carbon dioxide fixation, as well as the oxidative fragmentation of the pentose substrate in the photorespiration process. Both reactions occur simultaneously and in competition at the same active site. The sequence is that of Ribulose bisphosphate carboxylase large chain from Pinus balfouriana (Foxtail pine).